The sequence spans 296 residues: tRNA uridine(34) hydroxylase (296 aa).

The 96-residue stretch at Arg-130–Leu-225 folds into the Rhodanese domain. Cys-185 acts as the Cysteine persulfide intermediate in catalysis.

The protein belongs to the TrhO family.

The enzyme catalyses uridine(34) in tRNA + AH2 + O2 = 5-hydroxyuridine(34) in tRNA + A + H2O. In terms of biological role, catalyzes oxygen-dependent 5-hydroxyuridine (ho5U) modification at position 34 in tRNAs. This chain is tRNA uridine(34) hydroxylase, found in Kocuria rhizophila (strain ATCC 9341 / DSM 348 / NBRC 103217 / DC2201).